A 473-amino-acid chain; its full sequence is MNYLPIFIDLKSKNVLVIGAGEVGLNKIRILLRAKAKVNVIAKELCSEVKLLLRDQKINWLSKNFDLIYLNKIFLVVSATNDIKLNQYIFKKCNERCVLVNIVDDKLKCSFIFPSIIDRSPLIVAISSGGTAPVLLRLLREKIEAILPNKLGDVAKIAGKWRLAIKKHFSNFLERRKFWEKLFHSIFVEHILNGNKEQAINVLKKNMNQNISLTGEIILVGAGPGDSGLLTLRGLQVLQQADVVLYDYLVSEDILDLIRRDAKRICVGKRVGLKNITQNEIIKLLIFFAQKGKKVVRLKGGDPFIFGRGSEEIEAAKDAGIHFQVVPGITSAIGIAAYTGIPLTHRKYSQGVIFITGHKCIDGFLNNWSILSDPSYTLVVYMGTLKAVYIAQKLITFGRSKLTPIAIIVQGTTIHQKVIVGCLGEIEKIIPFAATPSLLIIGDVVHLHKKLAWFQSENILKKIKNKFSTLTFI.

The segment at 1–203 is precorrin-2 dehydrogenase /sirohydrochlorin ferrochelatase; sequence MNYLPIFIDL…GNKEQAINVL (203 aa). Residues 22 to 23 and 43 to 44 each bind NAD(+); these read EV and KE. Serine 128 carries the post-translational modification Phosphoserine. The tract at residues 215 to 473 is uroporphyrinogen-III C-methyltransferase; that stretch reads GEIILVGAGP…KNKFSTLTFI (259 aa). S-adenosyl-L-methionine is bound at residue proline 224. Aspartate 247 functions as the Proton acceptor in the catalytic mechanism. The active-site Proton donor is lysine 269. S-adenosyl-L-methionine-binding positions include 300-302, isoleucine 305, methionine 382, and glycine 411; that span reads GGD.

This sequence in the N-terminal section; belongs to the precorrin-2 dehydrogenase / sirohydrochlorin ferrochelatase family. The protein in the C-terminal section; belongs to the precorrin methyltransferase family.

It carries out the reaction uroporphyrinogen III + 2 S-adenosyl-L-methionine = precorrin-2 + 2 S-adenosyl-L-homocysteine + H(+). The enzyme catalyses precorrin-2 + NAD(+) = sirohydrochlorin + NADH + 2 H(+). It catalyses the reaction siroheme + 2 H(+) = sirohydrochlorin + Fe(2+). It functions in the pathway cofactor biosynthesis; adenosylcobalamin biosynthesis; precorrin-2 from uroporphyrinogen III: step 1/1. The protein operates within cofactor biosynthesis; adenosylcobalamin biosynthesis; sirohydrochlorin from precorrin-2: step 1/1. It participates in porphyrin-containing compound metabolism; siroheme biosynthesis; precorrin-2 from uroporphyrinogen III: step 1/1. Its pathway is porphyrin-containing compound metabolism; siroheme biosynthesis; siroheme from sirohydrochlorin: step 1/1. It functions in the pathway porphyrin-containing compound metabolism; siroheme biosynthesis; sirohydrochlorin from precorrin-2: step 1/1. Its function is as follows. Multifunctional enzyme that catalyzes the SAM-dependent methylations of uroporphyrinogen III at position C-2 and C-7 to form precorrin-2 via precorrin-1. Then it catalyzes the NAD-dependent ring dehydrogenation of precorrin-2 to yield sirohydrochlorin. Finally, it catalyzes the ferrochelation of sirohydrochlorin to yield siroheme. The sequence is that of Siroheme synthase from Buchnera aphidicola subsp. Acyrthosiphon pisum (strain APS) (Acyrthosiphon pisum symbiotic bacterium).